Consider the following 505-residue polypeptide: Protein MGF 505-4R (505 aa).

Belongs to the asfivirus MGF 505 family.

Its function is as follows. Plays a role in virus cell tropism, and may be required for efficient virus replication in macrophages. The protein is Protein MGF 505-4R of Ornithodoros (relapsing fever ticks).